The chain runs to 183 residues: Ribonuclease M5 (183 aa).

In terms of domain architecture, Toprim spans 6-90 (KEVIVVEGKD…AYISRVSGTK (85 aa)). Mg(2+) contacts are provided by Glu12, Asp59, and Asp61.

It belongs to the ribonuclease M5 family. It depends on Mg(2+) as a cofactor.

The protein localises to the cytoplasm. The enzyme catalyses Endonucleolytic cleavage of RNA, removing 21 and 42 nucleotides, respectively, from the 5'- and 3'-termini of a 5S-rRNA precursor.. In terms of biological role, required for correct processing of both the 5' and 3' ends of 5S rRNA precursor. Cleaves both sides of a double-stranded region yielding mature 5S rRNA in one step. This chain is Ribonuclease M5, found in Fusobacterium nucleatum subsp. nucleatum (strain ATCC 25586 / DSM 15643 / BCRC 10681 / CIP 101130 / JCM 8532 / KCTC 2640 / LMG 13131 / VPI 4355).